Here is a 299-residue protein sequence, read N- to C-terminus: MAWRKLGRIFAPSGELDWSRSHAALPVPEWIEGDIFRIYFSGRDGQNRSSIGSVIVDLAVGGKILDIPAEPILRPGARGMFDDCGVSIGSIVRAGDTRLLYYTGWNLAVTVPWKNTIGVAISEAGAPFERWSTFPVVALDERDPFSLSYPWVIQDGGTYRMWYGSNLGWGEGTDEIPHVIRYAQSRDGVHWEKQDRVHIDTSGSDNSAACRPCVVRDAGVYRMWFCARGAKYRIYCATSEDGLTWRQLGKDEGIDVSPDSWDSDMIEYPCVFDHRGQRFMLYSGDGYGRTGFGLAVLEN.

This is an uncharacterized protein from Mycobacterium tuberculosis (strain CDC 1551 / Oshkosh).